A 653-amino-acid polypeptide reads, in one-letter code: Potassium voltage-gated channel subfamily A member 4 (653 aa).

Over 1–304 (MEVAMVSAES…LLFEYPESSS (304 aa)) the chain is Cytoplasmic. The disordered stretch occupies residues 24 to 148 (QARARERERL…RFYYSEDDHG (125 aa)). Low complexity predominate over residues 36-52 (SRAAAAAAVAAATAAVE). Residues 81–97 (GSRRRRRQRSEKKKAHY) show a composition bias toward basic residues. Position 90 is a phosphoserine; by PKA (Ser90). Ser122 is subject to Phosphoserine. The segment covering 122-137 (SEEEEDEEEEEEEEEE) has biased composition (acidic residues). The helical transmembrane segment at 305–326 (PARGIAIVSVLVILISIVIFCL) threads the bilayer. The Extracellular portion of the chain corresponds to 327 to 370 (ETLPEFRDDRDLVMALSAGGHGGLLNDTSAPHLENSGHTIFNDP). N-linked (GlcNAc...) asparagine glycosylation occurs at Asn352. A helical transmembrane segment spans residues 371-392 (FFIVETVCIVWFSFEFVVRCFA). At 393–403 (CPSQALFFKNI) the chain is on the cytoplasmic side. Residues 404 to 424 (MNIIDIVSILPYFITLGTDLA) form a helical membrane-spanning segment. Residues 425 to 439 (QQQGGGNGQQQQAMS) are Extracellular-facing. The helical; Voltage-sensor transmembrane segment at 440–460 (FAILRIIRLVRVFRIFKLSRH) threads the bilayer. The Cytoplasmic segment spans residues 461–475 (SKGLQILGHTLRASM). The interval 462-475 (KGLQILGHTLRASM) is S4-S5 linker. A helical membrane pass occupies residues 476 to 497 (RELGLLIFFLFIGVILFSSAVY). Over 498 to 511 (FAEADEPTTHFQSI) the chain is Extracellular. The helical intramembrane region spans 512–523 (PDAFWWAVVTMT). The short motif at 524-529 (TVGYGD) is the Selectivity filter element. The stretch at 524 to 531 (TVGYGDMK) is an intramembrane region. Over 532-538 (PITVGGK) the chain is Extracellular. The chain crosses the membrane as a helical span at residues 539–567 (IVGSLCAIAGVLTIALPVPVIVSNFNYFY). The Cytoplasmic segment spans residues 568–653 (HRETENEEQT…SNAKAVETDV (86 aa)). Residue Ser599 is modified to Phosphoserine; by PKA. The span at 629–640 (CQGKGDDSETDK) shows a compositional bias: basic and acidic residues. The tract at residues 629–653 (CQGKGDDSETDKNNCSNAKAVETDV) is disordered. The short motif at 651-653 (TDV) is the PDZ-binding element.

Belongs to the potassium channel family. A (Shaker) (TC 1.A.1.2) subfamily. Kv1.4/KCNA4 sub-subfamily. In terms of assembly, homotetramer and heterotetramer of potassium channel proteins. Interacts with KCNAB1 and KCNAB2. Interacts with DLG1, DLG2 and DLG4 via their PDZ domains. Interacts with SIGMAR1. Detected in a complex with KCNA1. Interacts with KCNA2. Part of a complex containing KCNA1, KCNAB1 and LGI1. Interacts (via cytoplasmic N-terminal domain) with KCNRG. As to expression, expressed in brain, and at lower levels in the testis, lung, kidney, colon and heart. Detected in heart ventricle.

The protein localises to the cell membrane. It localises to the cell projection. It is found in the axon. It carries out the reaction K(+)(in) = K(+)(out). Its activity is regulated as follows. Inhibited by 4-aminopyridine (4-AP), but not by tetraethylammonium (TEA) and charybdotoxin (CTX). Voltage-gated potassium channel that mediates transmembrane potassium transport in excitable membranes. Forms tetrameric potassium-selective channels through which potassium ions pass in accordance with their electrochemical gradient. The channel alternates between opened and closed conformations in response to the voltage difference across the membrane. Can form functional homotetrameric channels and heterotetrameric channels that contain variable proportions of KCNA1, KCNA2, KCNA4, KCNA5, and possibly other family members as well; channel properties depend on the type of alpha subunits that are part of the channel. Channel properties are modulated by cytoplasmic beta subunits that regulate the subcellular location of the alpha subunits and promote rapid inactivation. In vivo, membranes probably contain a mixture of heteromeric potassium channel complexes, making it difficult to assign currents observed in intact tissues to any particular potassium channel family member. Homotetrameric KCNA4 forms a potassium channel that opens in response to membrane depolarization, followed by rapid spontaneous channel closure. Likewise, a heterotetrameric channel formed by KCNA1 and KCNA4 shows rapid inactivation. The sequence is that of Potassium voltage-gated channel subfamily A member 4 (KCNA4) from Homo sapiens (Human).